We begin with the raw amino-acid sequence, 208 residues long: uncharacterized protein (208 aa).

Positions 4–71 constitute a J domain; sequence DYYAILNITP…SRRAQYDRES (68 aa). The interval 67–100 is disordered; the sequence is YDRESASSSAKPRQSFFSRTNPQPQSQSQQGGPS. Residues 72–87 show a composition bias toward polar residues; sequence ASSSAKPRQSFFSRTN. Low complexity predominate over residues 88–100; the sequence is PQPQSQSQQGGPS. The helical transmembrane segment at 127-147 threads the bilayer; sequence GIANAFWTIVGTLAGAALGFI.

This sequence belongs to the DnaJ family.

Its subcellular location is the endoplasmic reticulum membrane. This is an uncharacterized protein from Schizosaccharomyces pombe (strain 972 / ATCC 24843) (Fission yeast).